Reading from the N-terminus, the 1487-residue chain is Collagen alpha-1(II) chain (1487 aa).

Positions 1–25 are cleaved as a signal peptide; that stretch reads MIRLGAPQTLVLLTLLVAAVLRCQG. Positions 26–181 are cleaved as a propeptide — N-terminal propeptide; the sequence is QDVQEAGSCV…PPGLGGNFAA (156 aa). The VWFC domain occupies 32 to 90; that stretch reads GSCVQDGQRYNDKDVWKPEPCRICVCDTGTVLCDDIICEDVKDCLSPEIPFGECCPICP. A disordered region spans residues 97–1237; it reads SGQPGPKGQK…PREKGPDPLQ (1141 aa). Basic and acidic residues-rich tracts occupy residues 105–116 and 133–154; these read QKGEPGDIKDIV and PRGD…RDGE. The span at 158 to 173 shows a compositional bias: pro residues; that stretch reads PGNPGPPGPPGPPGPP. K190 bears the 5-hydroxylysine mark. K190 carries an O-linked (Gal...) hydroxylysine glycan. Residues 201 to 1214 are triple-helical region; the sequence is GPMGPMGPRG…PGPPGPPGPP (1014 aa). A compositionally biased stretch (pro residues) spans 208 to 217; the sequence is PRGPPGPAGA. A compositionally biased stretch (low complexity) spans 218 to 239; sequence PGPQGFQGNPGEPGEPGVSGPM. Pro residues predominate over residues 241-250; sequence PRGPPGPPGK. The segment covering 251–265 has biased composition (basic and acidic residues); sequence PGDDGEAGKPGKAGE. Residues K287, K299, and K308 each carry the 5-hydroxylysine modification. 3 O-linked (Gal...) hydroxylysine glycosylation sites follow: K287, K299, and K308. Composition is skewed to low complexity over residues 310–320 and 335–350; these read ESGSPGENGSP and TGPA…DGQP. A compositionally biased stretch (gly residues) spans 360–369; sequence GPAGGPGFPG. Composition is skewed to low complexity over residues 370-382 and 391-431; these read APGA…PTGA and PRGE…AGAP. A 5-hydroxylysine modification is found at K374. The O-linked (Gal...) hydroxylysine glycan is linked to K374. A compositionally biased stretch (pro residues) spans 433 to 442; the sequence is FPGPRGPPGP. A 5-hydroxylysine mark is found at K608 and K620. K608 and K620 each carry an O-linked (Gal...) hydroxylysine glycan. Composition is skewed to low complexity over residues 622 to 631 and 656 to 667; these read LPGAPGLRGL and QGAPGPSGFQGL. Residues P659 and P668 each carry the 4-hydroxyproline modification. P670 carries the post-translational modification 3-hydroxyproline. Residues P671 and P674 each carry the 4-hydroxyproline modification. Residues 764-775 show a composition bias toward basic and acidic residues; that stretch reads KGDRGDVGEKGP. Low complexity-rich tracts occupy residues 833–848 and 877–913; these read AGFA…PGAK and PTGV…SNGN. Position 907 is a 3-hydroxyproline (P907). 4-hydroxyproline is present on residues P908, P914, and P920. Residues 1069 to 1079 show a composition bias toward pro residues; it reads APGPPGSPGPA. The span at 1115–1129 shows a compositional bias: basic and acidic residues; that stretch reads RGDKGEAGEPGERGL. A 5-hydroxylysine modification is found at K1130. The O-linked (Gal...) hydroxylysine glycan is linked to K1130. At P1144 the chain carries 3-hydroxyproline. The span at 1148–1157 shows a compositional bias: low complexity; that stretch reads SGDQGASGPA. P1181 is subject to 4-hydroxyproline. P1186 carries the post-translational modification 3-hydroxyproline. At P1187 the chain carries 4-hydroxyproline. The span at 1199–1216 shows a compositional bias: pro residues; sequence AGPPGNPGPPGPPGPPGP. Residue P1201 is modified to 3-hydroxyproline. 4-hydroxyproline is present on residues P1202 and P1205. A 3-hydroxyproline modification is found at P1207. P1208 and P1211 each carry 4-hydroxyproline. P1213 carries the 3-hydroxyproline modification. The residue at position 1214 (P1214) is a 4-hydroxyproline. Residues 1215 to 1241 form a nonhelical region (C-terminal) region; that stretch reads GPGIDMSAFAGLGPREKGPDPLQYMRA. Positions 1253 to 1487 constitute a Fibrillar collagen NC1 domain; it reads AEVDATLKSL…GVDIGPVCFL (235 aa). 3 cysteine pairs are disulfide-bonded: C1283–C1315, C1323–C1485, and C1393–C1438. 5 residues coordinate Ca(2+): D1301, N1303, Q1304, C1306, and D1309. The N-linked (GlcNAc...) asparagine glycan is linked to N1388.

It belongs to the fibrillar collagen family. In terms of assembly, homotrimers of alpha 1(II) chains. In terms of processing, the N-telopeptide is covalently linked to the helical COL2 region of alpha 1(IX), alpha 2(IX) and alpha 3(IX) chain. The C-telopeptide is covalently linked to an another site in the helical region of alpha 3(IX) COL2. Post-translationally, contains mostly 4-hydroxyproline. Prolines at the third position of the tripeptide repeating unit (G-X-P) are 4-hydroxylated in some or all of the chains. Contains 3-hydroxyproline at a few sites. This modification occurs on the first proline residue in the sequence motif Gly-Pro-Hyp, where Hyp is 4-hydroxyproline. In terms of processing, lysine residues at the third position of the tripeptide repeating unit (G-X-Y) are 5-hydroxylated in some or all of the chains. Post-translationally, O-glycosylated on hydroxylated lysine residues. The O-linked glycan consists of a Glc-Gal disaccharide. Isoform 2 is highly expressed in juvenile chondrocyte and low in fetal chondrocyte.

The protein localises to the secreted. Its subcellular location is the extracellular space. It localises to the extracellular matrix. Functionally, type II collagen is specific for cartilaginous tissues. It is essential for the normal embryonic development of the skeleton, for linear growth and for the ability of cartilage to resist compressive forces. This chain is Collagen alpha-1(II) chain, found in Homo sapiens (Human).